We begin with the raw amino-acid sequence, 1167 residues long: Integrin alpha-10 (1167 aa).

A signal peptide spans 1–22 (MELPFVTHLFLPLVFLTGLCSP). The Extracellular segment spans residues 23–1122 (FNLDEHHPRL…VVQTRPILIS (1100 aa)). FG-GAP repeat units follow at residues 24–85 (NLDE…HNAP) and 95–154 (QLGN…PQGS). A disulfide bridge connects residues Cys-76 and Cys-86. N-linked (GlcNAc...) asparagine glycans are attached at residues Asn-98, Asn-234, Asn-336, and Asn-364. Positions 167–350 (DVVIVLDGSN…AALTDIVDAL (184 aa)) constitute a VWFA domain. FG-GAP repeat units follow at residues 361 to 412 (HAEN…LFPP), 417 to 470 (EDEF…KDGA), 472 to 534 (RVAQ…SLLT), 535 to 593 (LQGT…GVRP), and 597 to 657 (QRIA…VTPQ). Asp-494, Asp-496, Asp-498, Asp-502, Asp-558, Asn-560, Asp-562, Asp-566, Asp-620, Asp-622, Asp-624, and Asp-628 together coordinate Ca(2+). 2 cysteine pairs are disulfide-bonded: Cys-666–Cys-675 and Cys-681–Cys-736. Asn-733 and Asn-763 each carry an N-linked (GlcNAc...) asparagine glycan. Residues Cys-789 and Cys-795 are joined by a disulfide bond. 5 N-linked (GlcNAc...) asparagine glycosylation sites follow: Asn-839, Asn-921, Asn-1011, Asn-1018, and Asn-1039. A helical membrane pass occupies residues 1123–1145 (LWILIGSVLGGLLLLALLVFCLW). Residues 1146-1167 (KLGFFAHKKIPEEEKREEKLEQ) lie on the Cytoplasmic side of the membrane.

This sequence belongs to the integrin alpha chain family. Heterodimer of an alpha and a beta subunit. Alpha-10 associates with beta-1. Widely expressed with highest expression in muscle and heart. Found in articular cartilage.

The protein localises to the membrane. Integrin alpha-10/beta-1 is a receptor for collagen. The chain is Integrin alpha-10 (ITGA10) from Homo sapiens (Human).